The following is a 495-amino-acid chain: uncharacterized protein (495 aa).

A signal peptide spans 1 to 17 (MRTLSLLILFLSTFLFA).

This is an uncharacterized protein from Aquifex aeolicus (strain VF5).